We begin with the raw amino-acid sequence, 242 residues long: DnaJ homolog subfamily B member 6 (242 aa).

Residues 3-69 enclose the J domain; that stretch reads EYYDVLGVQR…KKRDIYDKYG (67 aa).

As to quaternary structure, homooligomer.

Its subcellular location is the cytoplasm. The protein resides in the perinuclear region. It localises to the nucleus. Its function is as follows. Has a stimulatory effect on the ATPase activity of HSP70 in a dose-dependent and time-dependent manner and hence acts as a co-chaperone of HSP70. Plays an indispensable role in the organization of KRT8/KRT18 filaments. Acts as an endogenous molecular chaperone for neuronal proteins including huntingtin. Suppresses aggregation and toxicity of polyglutamine-containing, aggregation-prone proteins. Also reduces cellular toxicity and caspase-3 activity. The protein is DnaJ homolog subfamily B member 6 of Xenopus tropicalis (Western clawed frog).